A 171-amino-acid polypeptide reads, in one-letter code: UPF0398 protein Sez_1569 (171 aa).

This sequence belongs to the UPF0398 family.

The sequence is that of UPF0398 protein Sez_1569 from Streptococcus equi subsp. zooepidemicus (strain MGCS10565).